The primary structure comprises 913 residues: Probable TonB-dependent receptor HI_1217 (913 aa).

The first 27 residues, 1–27 (MKKAIKLNLITLGLINTIGMTITQAQA), serve as a signal peptide directing secretion. Residues 42-165 (SNDKKPFTEA…LAGSANFRTL (124 aa)) form the TBDR plug domain. The TBDR beta-barrel domain maps to 176-913 (PFGIILKGMT…TYILSLNYKF (738 aa)). The TonB C-terminal box signature appears at 896-913 (LYNFARGRTYILSLNYKF).

It belongs to the TonB-dependent receptor family.

It is found in the cell outer membrane. Functionally, probable receptor, TonB-dependent. In Haemophilus influenzae (strain ATCC 51907 / DSM 11121 / KW20 / Rd), this protein is Probable TonB-dependent receptor HI_1217.